A 325-amino-acid chain; its full sequence is tRNA (guanine-N(7)-)-methyltransferase (325 aa).

A disordered region spans residues 1 to 101 (MSEATDKQKQ…LEYPKSPESM (101 aa)). Polar residues predominate over residues 51–69 (VSTTPEPEQSDSSATTATI). Residues G122, 145-146 (EI), 199-200 (NA), and C219 contribute to the S-adenosyl-L-methionine site. D222 is a catalytic residue. 297-299 (TEE) contributes to the S-adenosyl-L-methionine binding site.

It belongs to the class I-like SAM-binding methyltransferase superfamily. TrmB family. Forms a complex with TRM82.

Its subcellular location is the nucleus. It catalyses the reaction guanosine(46) in tRNA + S-adenosyl-L-methionine = N(7)-methylguanosine(46) in tRNA + S-adenosyl-L-homocysteine. It participates in tRNA modification; N(7)-methylguanine-tRNA biosynthesis. Functionally, catalyzes the formation of N(7)-methylguanine at position 46 (m7G46) in tRNA. The sequence is that of tRNA (guanine-N(7)-)-methyltransferase from Candida albicans (strain SC5314 / ATCC MYA-2876) (Yeast).